The chain runs to 382 residues: MDLKTSNSPVIADPLPKLALPSAVMTYTTPTSFPSTGLYLNTPKKKPLPGKIEEVRAAGWLDLMLASSPPRKRQTKDFANDVQADELDLLYRNWVVNHPSALTSFEDIVNLARGKRLALFLDYDGTLSPIVDNPENAVMSDEMRSAVKHVASLFPTAIISGRSRDKVFDFVKLTELYYAGSHGMDIMGPVRKSDSSGQHVECIRSTDSEGKEVNLFQPASEFLPMISEVYKKLSESIKDIDGARMEDNKFCVSVHYRNVAPHDYGEVHQRVTAVLKNYPCLRLTHGRKVLEVRPVIDWNKGKAVEFLLESLGLCGKEDVLPIYVGDDKTDEDAFKVLKANSIGFGILVSSVPKDTDAFYSVRDPAEVMEFLKKLASWKEEST.

This sequence belongs to the trehalose phosphatase family. It depends on a divalent metal cation as a cofactor. Expressed in roots and shoots.

The enzyme catalyses alpha,alpha-trehalose 6-phosphate + H2O = alpha,alpha-trehalose + phosphate. Its pathway is glycan biosynthesis; trehalose biosynthesis. Removes the phosphate from trehalose 6-phosphate to produce free trehalose. Trehalose accumulation in plant may improve abiotic stress tolerance. This Oryza sativa subsp. japonica (Rice) protein is Probable trehalose-phosphate phosphatase 2 (TPP2).